Here is a 132-residue protein sequence, read N- to C-terminus: Small integral membrane protein 33 (132 aa).

A disordered region spans residues Met1 to Glu28. An N-linked (GlcNAc...) asparagine glycan is attached at Asn15. A helical membrane pass occupies residues Pro43–Val63. Residues Pro99–Leu132 are disordered.

The protein resides in the membrane. The protein is Small integral membrane protein 33 of Homo sapiens (Human).